Here is a 20-residue protein sequence, read N- to C-terminus: Dahlein-5.3 (20 aa).

Expressed by the skin dorsal glands.

The protein resides in the secreted. Has no antimicrobial activity. Strongly inhibits the formation of NO by neuronal nitric oxide synthase at micromolar concentrations. The sequence is that of Dahlein-5.3 from Ranoidea dahlii (Dahl's aquatic frog).